The sequence spans 232 residues: Putative N-acetylmannosamine-6-phosphate 2-epimerase (232 aa).

The protein belongs to the NanE family.

It carries out the reaction an N-acyl-D-glucosamine 6-phosphate = an N-acyl-D-mannosamine 6-phosphate. It functions in the pathway amino-sugar metabolism; N-acetylneuraminate degradation; D-fructose 6-phosphate from N-acetylneuraminate: step 3/5. Its function is as follows. Converts N-acetylmannosamine-6-phosphate (ManNAc-6-P) to N-acetylglucosamine-6-phosphate (GlcNAc-6-P). The protein is Putative N-acetylmannosamine-6-phosphate 2-epimerase of Borreliella afzelii (strain PKo) (Borrelia afzelii).